A 568-amino-acid polypeptide reads, in one-letter code: Oxygen-dependent choline dehydrogenase (568 aa).

8–37 (DYIIIGAGSAGNTLAARLTEDAGVTVLLLE) is a binding site for FAD. Histidine 477 (proton acceptor) is an active-site residue.

It belongs to the GMC oxidoreductase family. It depends on FAD as a cofactor.

The catalysed reaction is choline + A = betaine aldehyde + AH2. The enzyme catalyses betaine aldehyde + NAD(+) + H2O = glycine betaine + NADH + 2 H(+). It functions in the pathway amine and polyamine biosynthesis; betaine biosynthesis via choline pathway; betaine aldehyde from choline (cytochrome c reductase route): step 1/1. Its function is as follows. Involved in the biosynthesis of the osmoprotectant glycine betaine. Catalyzes the oxidation of choline to betaine aldehyde and betaine aldehyde to glycine betaine at the same rate. The sequence is that of Oxygen-dependent choline dehydrogenase from Pseudomonas savastanoi pv. phaseolicola (strain 1448A / Race 6) (Pseudomonas syringae pv. phaseolicola (strain 1448A / Race 6)).